Here is a 76-residue protein sequence, read N- to C-terminus: U14-hexatoxin-Hi1a (76 aa).

Positions 1 to 18 (MMQLAVLICLSLVVNTFA) are cleaved as a signal peptide. 3 disulfides stabilise this stretch: Cys-21–Cys-34, Cys-27–Cys-39, and Cys-33–Cys-61.

In terms of tissue distribution, expressed by the venom gland.

The protein resides in the secreted. Probable ion channel inhibitor. The polypeptide is U14-hexatoxin-Hi1a (Hadronyche infensa (Fraser island funnel-web spider)).